The following is a 484-amino-acid chain: Adenylosuccinate synthetase, chloroplastic (484 aa).

A chloroplast-targeting transit peptide spans 1-44 (MSLSTLSHPAAAAAGSGKSLFPAGPAAQSVHFPKARLPVPAAVS). Residues 71-77 (GDEGKGK) and 99-101 (GHT) contribute to the GTP site. Residue Asp-72 is the Proton acceptor of the active site. Mg(2+)-binding residues include Asp-72 and Gly-99. IMP-binding positions include 72-75 (DEGK), 97-100 (NAGH), Thr-189, Arg-203, Gln-283, Thr-298, and Arg-362. Residue His-100 is the Proton donor of the active site. 358–364 (TTTGRPR) lines the substrate pocket. GTP is bound by residues Arg-364, 390-392 (KLD), and 473-475 (GVG).

It belongs to the adenylosuccinate synthetase family. As to quaternary structure, homodimer. It depends on Mg(2+) as a cofactor.

Its subcellular location is the plastid. The protein resides in the chloroplast. It carries out the reaction IMP + L-aspartate + GTP = N(6)-(1,2-dicarboxyethyl)-AMP + GDP + phosphate + 2 H(+). It functions in the pathway purine metabolism; AMP biosynthesis via de novo pathway; AMP from IMP: step 1/2. Functionally, plays an important role in the de novo pathway and in the salvage pathway of purine nucleotide biosynthesis. Catalyzes the first committed step in the biosynthesis of AMP from IMP. In Zea mays (Maize), this protein is Adenylosuccinate synthetase, chloroplastic.